Reading from the N-terminus, the 131-residue chain is ER membrane protein complex subunit 5 (131 aa).

The Cytoplasmic segment spans residues 1 to 3 (MAP). Residues 4-22 (SLWKGLVGIGLFALAHAAL) traverse the membrane as a helical segment. The Lumenal segment spans residues 23–43 (SAAQHRSYMRLTEKEDESLPI). A helical membrane pass occupies residues 44-63 (DIVLQTLLAFAVTCYGIVHI). Residues 64-131 (AGEFKDMDAT…KLRKLESLRR (68 aa)) are Cytoplasmic-facing. S120 carries the post-translational modification Phosphoserine.

The protein belongs to the membrane magnesium transporter (TC 1.A.67) family. As to quaternary structure, component of the ER membrane protein complex (EMC).

It localises to the endoplasmic reticulum membrane. The protein localises to the golgi apparatus membrane. It is found in the early endosome membrane. Its function is as follows. Part of the endoplasmic reticulum membrane protein complex (EMC) that enables the energy-independent insertion into endoplasmic reticulum membranes of newly synthesized membrane proteins. Preferentially accommodates proteins with transmembrane domains that are weakly hydrophobic or contain destabilizing features such as charged and aromatic residues. Involved in the cotranslational insertion of multi-pass membrane proteins in which stop-transfer membrane-anchor sequences become ER membrane spanning helices. It is also required for the post-translational insertion of tail-anchored/TA proteins in endoplasmic reticulum membranes. By mediating the proper cotranslational insertion of N-terminal transmembrane domains in an N-exo topology, with translocated N-terminus in the lumen of the ER, controls the topology of multi-pass membrane proteins like the G protein-coupled receptors. By regulating the insertion of various proteins in membranes, it is indirectly involved in many cellular processes. May be involved in Mg(2+) transport. This is ER membrane protein complex subunit 5 from Pongo abelii (Sumatran orangutan).